The following is a 304-amino-acid chain: ATP phosphoribosyltransferase (304 aa).

Belongs to the ATP phosphoribosyltransferase family. Long subfamily. Requires Mg(2+) as cofactor.

The protein localises to the cytoplasm. The enzyme catalyses 1-(5-phospho-beta-D-ribosyl)-ATP + diphosphate = 5-phospho-alpha-D-ribose 1-diphosphate + ATP. It participates in amino-acid biosynthesis; L-histidine biosynthesis; L-histidine from 5-phospho-alpha-D-ribose 1-diphosphate: step 1/9. Feedback inhibited by histidine. In terms of biological role, catalyzes the condensation of ATP and 5-phosphoribose 1-diphosphate to form N'-(5'-phosphoribosyl)-ATP (PR-ATP). Has a crucial role in the pathway because the rate of histidine biosynthesis seems to be controlled primarily by regulation of HisG enzymatic activity. The sequence is that of ATP phosphoribosyltransferase from Xylella fastidiosa (strain 9a5c).